The following is a 169-amino-acid chain: Large ribosomal subunit protein uL10 (169 aa).

It belongs to the universal ribosomal protein uL10 family. As to quaternary structure, part of the ribosomal stalk of the 50S ribosomal subunit. The N-terminus interacts with L11 and the large rRNA to form the base of the stalk. The C-terminus forms an elongated spine to which L12 dimers bind in a sequential fashion forming a multimeric L10(L12)X complex.

Its function is as follows. Forms part of the ribosomal stalk, playing a central role in the interaction of the ribosome with GTP-bound translation factors. This is Large ribosomal subunit protein uL10 from Onion yellows phytoplasma (strain OY-M).